The chain runs to 113 residues: Retrotransposon Gag-like protein 8 (113 aa).

Belongs to the FAM127 family.

In Bos taurus (Bovine), this protein is Retrotransposon Gag-like protein 8 (RTL8A).